The following is a 159-amino-acid chain: Phosphopantetheine adenylyltransferase (159 aa).

Threonine 10 serves as a coordination point for substrate. Residues 10–11 (TF) and histidine 18 contribute to the ATP site. Residues lysine 42, methionine 74, and arginine 88 each contribute to the substrate site. ATP-binding positions include 89 to 91 (GLR), glutamate 99, and 124 to 130 (WSFISSS).

The protein belongs to the bacterial CoaD family. In terms of assembly, homohexamer. Mg(2+) serves as cofactor.

Its subcellular location is the cytoplasm. It catalyses the reaction (R)-4'-phosphopantetheine + ATP + H(+) = 3'-dephospho-CoA + diphosphate. It participates in cofactor biosynthesis; coenzyme A biosynthesis; CoA from (R)-pantothenate: step 4/5. Functionally, reversibly transfers an adenylyl group from ATP to 4'-phosphopantetheine, yielding dephospho-CoA (dPCoA) and pyrophosphate. The polypeptide is Phosphopantetheine adenylyltransferase (Yersinia pseudotuberculosis serotype O:3 (strain YPIII)).